A 112-amino-acid polypeptide reads, in one-letter code: Tetracenomycin-F1 monooxygenase (112 aa).

Positions 11-100 (FTLVNVFGVA…SRPKPIFCEV (90 aa)) constitute an ABM domain.

As to quaternary structure, homotrimer.

The catalysed reaction is tetracenomycin F1 + O2 = tetracenomycin D3 + H2O + H(+). It functions in the pathway antibiotic biosynthesis; tetracenomycin C biosynthesis. Inhibited by p-chloromercuribenzoic acid, N-ethylmaleimide and diethyl pyrocarbonate. Its function is as follows. Oxygenase required for conversion of tetracenomycin F1 to tetracenomycin D3. The polypeptide is Tetracenomycin-F1 monooxygenase (tcmH) (Streptomyces glaucescens).